We begin with the raw amino-acid sequence, 166 residues long: Mitochondrial translation release factor in rescue (166 aa).

A mitochondrion-targeting transit peptide spans 1 to 35; sequence MSTVGLFHFPTPLTRICPAPWGLRLWEKLTLLSPG. The GGQ domain stretch occupies residues 57–121; the sequence is ENELEEQFVK…LQEKVDVFYN (65 aa). Residues 71–73 carry the GGQ motif; that stretch reads GGQ. Gln73 is subject to N5-methylglutamine. Positions 122–148 are disordered; sequence GENSPVHKEKREAAKKKQERKKRAKET. Residues 126–137 are compositionally biased toward basic and acidic residues; the sequence is PVHKEKREAAKK. Residues 127–160 adopt a coiled-coil conformation; the sequence is VHKEKREAAKKKQERKKRAKETLEKKKLLKELWE.

This sequence belongs to the prokaryotic/mitochondrial release factor family. In terms of assembly, interacts (via C-terminus) with MTRES1 (via S4 domain). Associates with mitoribosomal S39 large subunit, peptidyl tRNA and nascent chain. Methylation of glutamine in the GGQ triplet by HEMK1. In terms of tissue distribution, expressed in all areas of the brain tested.

The protein resides in the mitochondrion. Its function is as follows. Part of a mitoribosome-associated quality control pathway that prevents aberrant translation by responding to interruptions during elongation. As heterodimer with MTRES1, ejects the unfinished nascent chain and peptidyl transfer RNA (tRNA), respectively, from stalled ribosomes. Recruitment of mitoribosome biogenesis factors to these quality control intermediates suggests additional roles for MTRES1 and MTRF during mitoribosome rescue. This is Mitochondrial translation release factor in rescue from Homo sapiens (Human).